The chain runs to 109 residues: Cell division protein ZapA (109 aa).

Positions 21 to 99 (PEQRDALNQA…IEQALLEQGR (79 aa)) form a coiled coil.

The protein belongs to the ZapA family. Type 1 subfamily. In terms of assembly, homodimer. Interacts with FtsZ.

It is found in the cytoplasm. Its function is as follows. Activator of cell division through the inhibition of FtsZ GTPase activity, therefore promoting FtsZ assembly into bundles of protofilaments necessary for the formation of the division Z ring. It is recruited early at mid-cell but it is not essential for cell division. The polypeptide is Cell division protein ZapA (Klebsiella pneumoniae subsp. pneumoniae (strain ATCC 700721 / MGH 78578)).